A 320-amino-acid polypeptide reads, in one-letter code: L-lactate dehydrogenase 2 (320 aa).

4 residues coordinate NAD(+): V16, D37, K42, and Y69. Residue R94 coordinates substrate. NAD(+) contacts are provided by residues S107, 124 to 126, and T149; that span reads VTN. 126 to 129 provides a ligand contact to substrate; it reads NPVD. 154–157 contributes to the substrate binding site; sequence DTAR. Beta-D-fructose 1,6-bisphosphate contacts are provided by R159 and H174. H181 serves as the catalytic Proton acceptor. Residue T235 participates in substrate binding.

Belongs to the LDH/MDH superfamily. LDH family. In terms of assembly, homotetramer.

The protein resides in the cytoplasm. It carries out the reaction (S)-lactate + NAD(+) = pyruvate + NADH + H(+). It participates in fermentation; pyruvate fermentation to lactate; (S)-lactate from pyruvate: step 1/1. With respect to regulation, allosterically activated by fructose 1,6-bisphosphate (FBP). Its function is as follows. Catalyzes the conversion of lactate to pyruvate. This chain is L-lactate dehydrogenase 2, found in Clostridium acetobutylicum (strain ATCC 824 / DSM 792 / JCM 1419 / IAM 19013 / LMG 5710 / NBRC 13948 / NRRL B-527 / VKM B-1787 / 2291 / W).